The following is a 406-amino-acid chain: Cysteine desulfurase (406 aa).

Lysine 226 carries the N6-(pyridoxal phosphate)lysine modification. Cysteine 364 functions as the Cysteine persulfide intermediate in the catalytic mechanism.

Belongs to the class-V pyridoxal-phosphate-dependent aminotransferase family. Csd subfamily. In terms of assembly, homodimer. Interacts with SufE and the SufBCD complex composed of SufB, SufC and SufD. The interaction with SufE is required to mediate the direct transfer of the sulfur atom from the S-sulfanylcysteine. Requires pyridoxal 5'-phosphate as cofactor.

Its subcellular location is the cytoplasm. It catalyses the reaction (sulfur carrier)-H + L-cysteine = (sulfur carrier)-SH + L-alanine. The enzyme catalyses L-selenocysteine + AH2 = hydrogenselenide + L-alanine + A + H(+). Its pathway is cofactor biosynthesis; iron-sulfur cluster biosynthesis. Its function is as follows. Cysteine desulfurases mobilize the sulfur from L-cysteine to yield L-alanine, an essential step in sulfur metabolism for biosynthesis of a variety of sulfur-containing biomolecules. Component of the suf operon, which is activated and required under specific conditions such as oxidative stress and iron limitation. Acts as a potent selenocysteine lyase in vitro, that mobilizes selenium from L-selenocysteine. Selenocysteine lyase activity is however unsure in vivo. This Escherichia coli O8 (strain IAI1) protein is Cysteine desulfurase.